A 237-amino-acid polypeptide reads, in one-letter code: MQFVNSGISVTDLRKTFGNSEIIKGVTLDIEDGDYVSLTGKSGSGKSTLLYMISSLDPPSSGTIKIDKKDIYRMNEEEIHEFRNKRMGFIFQFHYLLPEFTAIENVLMPARKAGLLKEYQSYAEHLLEEFDLKDRMNYRINRLSGGQAQRVAIARALVMNPKYIFADEPTGALDSTNTKVVMNILEKVNRETKTTILVVTHDPDFASKTKRQIHLVDGRVVSLKEFEAIKKSVKTAR.

The region spanning 8–236 (ISVTDLRKTF…EAIKKSVKTA (229 aa)) is the ABC transporter domain. 40–47 (GKSGSGKS) is an ATP binding site.

It belongs to the ABC transporter superfamily. Lipoprotein translocase (TC 3.A.1.125) family. In terms of assembly, the complex is composed of two ATP-binding proteins (LolD) and two transmembrane proteins (LolC and LolE).

The protein resides in the cell inner membrane. Part of the ABC transporter complex LolCDE involved in the translocation of mature outer membrane-directed lipoproteins, from the inner membrane to the periplasmic chaperone, LolA. Responsible for the formation of the LolA-lipoprotein complex in an ATP-dependent manner. The sequence is that of Lipoprotein-releasing system ATP-binding protein LolD from Leptospira interrogans serogroup Icterohaemorrhagiae serovar Lai (strain 56601).